The chain runs to 319 residues: Ornithine carbamoyltransferase (319 aa).

Carbamoyl phosphate is bound by residues 57 to 60 (STRT), Q84, R108, and 135 to 138 (HPCQ). L-ornithine-binding positions include N166, D230, and 234–235 (SM). Carbamoyl phosphate is bound by residues 270-271 (CL) and R298.

Belongs to the aspartate/ornithine carbamoyltransferase superfamily. OTCase family.

The protein resides in the cytoplasm. The enzyme catalyses carbamoyl phosphate + L-ornithine = L-citrulline + phosphate + H(+). It participates in amino-acid biosynthesis; L-arginine biosynthesis; L-arginine from L-ornithine and carbamoyl phosphate: step 1/3. Its function is as follows. Reversibly catalyzes the transfer of the carbamoyl group from carbamoyl phosphate (CP) to the N(epsilon) atom of ornithine (ORN) to produce L-citrulline. In Bacillus subtilis (strain 168), this protein is Ornithine carbamoyltransferase (argF).